We begin with the raw amino-acid sequence, 874 residues long: Probable inorganic carbon transporter subunit DabA (874 aa).

C398, D400, H580, and C595 together coordinate Zn(2+).

It belongs to the inorganic carbon transporter (TC 9.A.2) DabA family. Forms a complex with DabB. It depends on Zn(2+) as a cofactor.

The protein localises to the cell membrane. Part of an energy-coupled inorganic carbon pump. This Bacillus cereus (strain AH820) protein is Probable inorganic carbon transporter subunit DabA.